The sequence spans 281 residues: MERPPRALLLGAAGLLLLLLPLSSSSSSDACGPCVPASCPALPRLGCPLGETRDACGCCPVCARGEGEPCGGGAAGRGHCAPGMECVKSRKRRKGKAGAAAGGPATLAVCVCKSRYPVCGSNGITYPSGCQLRAASLRAESRGEKAITQVSKGTCEQGPSIVTPPKDIWNVTGAKVFLSCEVIGIPTPVLIWNKVKRDHSGVQRTELLPGDRENLAIQTRGGPEKHEVTGWVLVSPLSKEDAGEYECHASNSQGQASAAAKITVVDALHEIPLKKGEGAQL.

A signal peptide spans 1–25; that stretch reads MERPPRALLLGAAGLLLLLLPLSSS. The region spanning 27–113 is the IGFBP N-terminal domain; that stretch reads SSDACGPCVP…PATLAVCVCK (87 aa). Intrachain disulfides connect C31/C56, C34/C58, C39/C59, C47/C62, C70/C86, C80/C110, C112/C130, and C119/C155. In terms of domain architecture, Kazal-like spans 98 to 157; it reads GAAAGGPATLAVCVCKSRYPVCGSNGITYPSGCQLRAASLRAESRGEKAITQVSKGTCEQ. An Ig-like C2-type domain is found at 159 to 263; the sequence is PSIVTPPKDI…GQASAAAKIT (105 aa). A glycan (N-linked (GlcNAc...) asparagine) is linked at N170. C180 and C247 are oxidised to a cystine. S238 carries the post-translational modification Phosphoserine.

May interact with VPS24/CHMP3; the relevance of such interaction however remains unclear. Interacts with CD93; this interaction plays a role in endothelial cells angiogenesis. Post-translationally, N-glycosylated. Expressed at high levels in lung, kidney, small intestine, testis and uterus and at moderate levels in liver.

The protein resides in the secreted. Functionally, binds IGF1 and IGF2 with a relatively low affinity. Stimulates prostacyclin (PGI2) production. Stimulates cell adhesion. Acts as a ligand for CD93 to play a role in angiogenesis. The sequence is that of Insulin-like growth factor-binding protein 7 (Igfbp7) from Mus musculus (Mouse).